The primary structure comprises 249 residues: Putative SAP domain-containing protein 049L (249 aa).

3 stretches are compositionally biased toward basic and acidic residues: residues Met-1 to Pro-12, Pro-22 to Cys-38, and Lys-95 to Glu-107. The tract at residues Met-1–Gly-110 is disordered. The 35-residue stretch at Leu-119–Asp-153 folds into the SAP domain.

This Frog virus 3 (isolate Goorha) (FV-3) protein is Putative SAP domain-containing protein 049L.